A 149-amino-acid polypeptide reads, in one-letter code: Transcriptional repressor NrdR (149 aa).

A zinc finger lies at 3-34; sequence CPFCSHLETQVIETRVFEDAASIRRRRQCAAC. The ATP-cone domain maps to 49–139; the sequence is PAVVKKDGRR…VYRSFEGIDD (91 aa).

The protein belongs to the NrdR family. It depends on Zn(2+) as a cofactor.

In terms of biological role, negatively regulates transcription of bacterial ribonucleotide reductase nrd genes and operons by binding to NrdR-boxes. In Verminephrobacter eiseniae (strain EF01-2), this protein is Transcriptional repressor NrdR.